A 335-amino-acid chain; its full sequence is Tetraacyldisaccharide 4'-kinase (335 aa).

ATP is bound at residue 58-65 (VVGGSGKT).

This sequence belongs to the LpxK family.

The enzyme catalyses a lipid A disaccharide + ATP = a lipid IVA + ADP + H(+). It functions in the pathway glycolipid biosynthesis; lipid IV(A) biosynthesis; lipid IV(A) from (3R)-3-hydroxytetradecanoyl-[acyl-carrier-protein] and UDP-N-acetyl-alpha-D-glucosamine: step 6/6. Transfers the gamma-phosphate of ATP to the 4'-position of a tetraacyldisaccharide 1-phosphate intermediate (termed DS-1-P) to form tetraacyldisaccharide 1,4'-bis-phosphate (lipid IVA). The chain is Tetraacyldisaccharide 4'-kinase from Hydrogenovibrio crunogenus (strain DSM 25203 / XCL-2) (Thiomicrospira crunogena).